The following is a 275-amino-acid chain: Phosphate import ATP-binding protein PstB (275 aa).

Residues 28–270 (IDCRDIRVFY…PREKRTEDYI (243 aa)) form the ABC transporter domain. 60–67 (GPSGCGKS) contributes to the ATP binding site.

Belongs to the ABC transporter superfamily. Phosphate importer (TC 3.A.1.7) family. The complex is composed of two ATP-binding proteins (PstB), two transmembrane proteins (PstC and PstA) and a solute-binding protein (PstS).

The protein resides in the cell inner membrane. The enzyme catalyses phosphate(out) + ATP + H2O = ADP + 2 phosphate(in) + H(+). Functionally, part of the ABC transporter complex PstSACB involved in phosphate import. Responsible for energy coupling to the transport system. The chain is Phosphate import ATP-binding protein PstB from Hyphomonas neptunium (strain ATCC 15444).